The following is a 316-amino-acid chain: Probable cell division protein WhiA (316 aa).

Residues 275–309 (TLKELGEMVSGGKISKSGINHRLRKIDEIAEKLRA) constitute a DNA-binding region (H-T-H motif).

It belongs to the WhiA family.

Its function is as follows. Involved in cell division and chromosome segregation. In Bacillus cytotoxicus (strain DSM 22905 / CIP 110041 / 391-98 / NVH 391-98), this protein is Probable cell division protein WhiA.